The chain runs to 169 residues: Crossover junction endodeoxyribonuclease RuvC (169 aa).

Active-site residues include aspartate 11, glutamate 71, and aspartate 143. Residues aspartate 11, glutamate 71, and aspartate 143 each contribute to the Mg(2+) site.

The protein belongs to the RuvC family. In terms of assembly, homodimer which binds Holliday junction (HJ) DNA. The HJ becomes 2-fold symmetrical on binding to RuvC with unstacked arms; it has a different conformation from HJ DNA in complex with RuvA. In the full resolvosome a probable DNA-RuvA(4)-RuvB(12)-RuvC(2) complex forms which resolves the HJ. Mg(2+) is required as a cofactor.

The protein localises to the cytoplasm. It catalyses the reaction Endonucleolytic cleavage at a junction such as a reciprocal single-stranded crossover between two homologous DNA duplexes (Holliday junction).. Its function is as follows. The RuvA-RuvB-RuvC complex processes Holliday junction (HJ) DNA during genetic recombination and DNA repair. Endonuclease that resolves HJ intermediates. Cleaves cruciform DNA by making single-stranded nicks across the HJ at symmetrical positions within the homologous arms, yielding a 5'-phosphate and a 3'-hydroxyl group; requires a central core of homology in the junction. The consensus cleavage sequence is 5'-(A/T)TT(C/G)-3'. Cleavage occurs on the 3'-side of the TT dinucleotide at the point of strand exchange. HJ branch migration catalyzed by RuvA-RuvB allows RuvC to scan DNA until it finds its consensus sequence, where it cleaves and resolves the cruciform DNA. In Rhizobium johnstonii (strain DSM 114642 / LMG 32736 / 3841) (Rhizobium leguminosarum bv. viciae), this protein is Crossover junction endodeoxyribonuclease RuvC.